The primary structure comprises 74 residues: UPF0435 protein BcerKBAB4_0386 (74 aa).

Belongs to the UPF0435 family.

The sequence is that of UPF0435 protein BcerKBAB4_0386 from Bacillus mycoides (strain KBAB4) (Bacillus weihenstephanensis).